The following is a 349-amino-acid chain: MDDNKAKALKAALGQIEKQFGKNTIMHLGDNSATLDVDVVSTGSLGLDIALGIGGLPKGRIIEIYGPESSGKTTLTLQAIAECQKQGGTCAFIDAEHALDPIYARKLGVNTDDLLVSQPDNGEQALEITDMLVRSGALDMIVIDSVAALTPRAEIEGEMGDSHMGLQARLMSQALRKITGNAKRSNCMVIFINQIRMKIGVMFGSPETTTGGNALKFYASVRLDIRRIGAVKSGDEIIGNQTRVKVIKNKMAPPFRQAEFEITYGEGTNHLAEVIDLGVEIGVVGKAGAWYSYGDEKIGQGKANSVLFLKDNPAIAEEIEAKIRAEKLAVEPEKGAEAVDEVEPESEVE.

Position 66–73 (66–73 (GPESSGKT)) interacts with ATP.

The protein belongs to the RecA family.

The protein localises to the cytoplasm. Its function is as follows. Can catalyze the hydrolysis of ATP in the presence of single-stranded DNA, the ATP-dependent uptake of single-stranded DNA by duplex DNA, and the ATP-dependent hybridization of homologous single-stranded DNAs. It interacts with LexA causing its activation and leading to its autocatalytic cleavage. This chain is Protein RecA, found in Psychrobacter sp. (strain PRwf-1).